The chain runs to 143 residues: Hemoglobin subunit alpha-2 (143 aa).

Serine 2 is subject to N-acetylserine. The Globin domain occupies 2–143 (SLTEKDKAAV…LSLALAEKYR (142 aa)). Histidine 60 contacts O2. Histidine 89 provides a ligand contact to heme b.

Belongs to the globin family. In terms of assembly, hb2 is a heterotetramer of two alpha-2 chains and two beta-1 chains; Hb3 is a heterotetramer of two alpha-2 chains and two beta-2 chains. As to expression, red blood cells.

Involved in oxygen transport from gills to the various peripheral tissues. This Anarhichas minor (Arctic spotted wolffish) protein is Hemoglobin subunit alpha-2 (hba2).